The primary structure comprises 446 residues: MSRKYFGTDGIRGRVGEYPITPDFMLKLGWAAGMAFRKQGHCRVLVGKDTRISGYMFESALEAGLSAAGADVMLLGPMPTPAIAYLTRTFHAEAGIVISASHNPHDDNGIKFFSGQGTKLPDEVELMIEELLDQPMTVVESGKLGKVSRINDAAGRYIEFCKSSVPSSTSFEGLKLVVDCAHGATYKVAPSVFRELGADVTVLHAQPDGLNINEGCGSTHIESLQAAVLVGHADLGIAFDGDGDRVLMVDHTGAIVDGDELLFIIARDLQEHGKLQGGVVGTLMSNLGLELALKDLDIPFVRAKVGDRYVMAELLEREWLVGGENSGHVVCCNHTTTGDAIIAALQVLMALKRRGETLAQARQALRKCPQVLINVRFGASKVDPLEHPAVKEASAKVTEALAGRGRVLLRKSGTEPLVRVMVEGEDESQVRAHAEALAKLVGEVCV.

Serine 101 acts as the Phosphoserine intermediate in catalysis. Mg(2+) contacts are provided by serine 101, aspartate 240, aspartate 242, and aspartate 244. Serine 101 is subject to Phosphoserine.

It belongs to the phosphohexose mutase family. It depends on Mg(2+) as a cofactor. Post-translationally, activated by phosphorylation.

The catalysed reaction is alpha-D-glucosamine 1-phosphate = D-glucosamine 6-phosphate. Catalyzes the conversion of glucosamine-6-phosphate to glucosamine-1-phosphate. This Pseudomonas putida (strain ATCC 47054 / DSM 6125 / CFBP 8728 / NCIMB 11950 / KT2440) protein is Phosphoglucosamine mutase.